A 205-amino-acid polypeptide reads, in one-letter code: uncharacterized protein (205 aa).

The protein belongs to the IIV-6 170L family.

This is an uncharacterized protein from Invertebrate iridescent virus 3 (IIV-3).